The primary structure comprises 714 residues: GATA zinc finger domain-containing protein 10 (714 aa).

Disordered stretches follow at residues 28 to 97 (YIQQ…NKQI), 115 to 180 (TMPH…QQQQ), 266 to 362 (MPMN…QQQQ), 394 to 419 (QQQQ…ESMD), 454 to 476 (MHLQ…QQIQ), and 528 to 621 (IQQQ…RRRT). 2 stretches are compositionally biased toward low complexity: residues 30–94 (QQQQ…NNNN) and 130–147 (QQQQ…QHPH). The span at 148–168 (QQQHPHQQQHPHQQQHPHQQQ) shows a compositional bias: basic residues. A compositionally biased stretch (low complexity) spans 169–180 (HPHQQQIQQQQQ). The span at 271-282 (GGNSRKNSFDMY) shows a compositional bias: polar residues. 2 stretches are compositionally biased toward low complexity: residues 283–322 (NNNN…NNNI) and 340–362 (QHQQ…QQQQ). Composition is skewed to low complexity over residues 457 to 476 (QQQQ…QQIQ) and 528 to 549 (IQQQ…TPNN). A compositionally biased stretch (polar residues) spans 550 to 569 (GSPSSSDGKSPVNSNTAITS). Low complexity predominate over residues 570–588 (NNNNNNNNNNNNNNNNNNN). A GATA-type zinc finger spans residues 631–656 (CHYCEVTETPEWRRGPDGDHTLCNAC). Positions 661–694 (AKSQKKLAREKELEKQKELEREKERENTRKHSID) form a coiled coil. Positions 667-693 (LAREKELEKQKELEREKERENTRKHSI) are enriched in basic and acidic residues. The disordered stretch occupies residues 667–714 (LAREKELEKQKELEREKERENTRKHSIDFMLMNDTSSAPTNSQNPTPN). The span at 699-714 (NDTSSAPTNSQNPTPN) shows a compositional bias: polar residues.

The chain is GATA zinc finger domain-containing protein 10 (gtaJ) from Dictyostelium discoideum (Social amoeba).